Here is a 124-residue protein sequence, read N- to C-terminus: Urease subunit beta (124 aa).

This sequence belongs to the urease beta subunit family. In terms of assembly, heterotrimer of UreA (gamma), UreB (beta) and UreC (alpha) subunits. Three heterotrimers associate to form the active enzyme.

Its subcellular location is the cytoplasm. It catalyses the reaction urea + 2 H2O + H(+) = hydrogencarbonate + 2 NH4(+). It participates in nitrogen metabolism; urea degradation; CO(2) and NH(3) from urea (urease route): step 1/1. In Bacillus velezensis (strain DSM 23117 / BGSC 10A6 / LMG 26770 / FZB42) (Bacillus amyloliquefaciens subsp. plantarum), this protein is Urease subunit beta.